The sequence spans 177 residues: Adenine phosphoribosyltransferase (177 aa).

Belongs to the purine/pyrimidine phosphoribosyltransferase family. In terms of assembly, homodimer.

Its subcellular location is the cytoplasm. It catalyses the reaction AMP + diphosphate = 5-phospho-alpha-D-ribose 1-diphosphate + adenine. Its pathway is purine metabolism; AMP biosynthesis via salvage pathway; AMP from adenine: step 1/1. In terms of biological role, catalyzes a salvage reaction resulting in the formation of AMP, that is energically less costly than de novo synthesis. In Chlorobium limicola (strain DSM 245 / NBRC 103803 / 6330), this protein is Adenine phosphoribosyltransferase.